Consider the following 495-residue polypeptide: Glutamate--tRNA ligase (495 aa).

A 'HIGH' region motif is present at residues 12–22 (PSPTGHLHIGN). The 'KMSKS' region signature appears at 259–263 (KLSKR). Lys262 is a binding site for ATP.

It belongs to the class-I aminoacyl-tRNA synthetase family. Glutamate--tRNA ligase type 1 subfamily. Monomer.

The protein localises to the cytoplasm. The catalysed reaction is tRNA(Glu) + L-glutamate + ATP = L-glutamyl-tRNA(Glu) + AMP + diphosphate. In terms of biological role, catalyzes the attachment of glutamate to tRNA(Glu) in a two-step reaction: glutamate is first activated by ATP to form Glu-AMP and then transferred to the acceptor end of tRNA(Glu). This Pediococcus pentosaceus (strain ATCC 25745 / CCUG 21536 / LMG 10740 / 183-1w) protein is Glutamate--tRNA ligase.